A 448-amino-acid chain; its full sequence is uncharacterized protein (448 aa).

257 to 264 is an ATP binding site; sequence GRNAQGKT.

This is an uncharacterized protein from Methanocaldococcus jannaschii (strain ATCC 43067 / DSM 2661 / JAL-1 / JCM 10045 / NBRC 100440) (Methanococcus jannaschii).